Here is a 544-residue protein sequence, read N- to C-terminus: Chaperonin GroEL (544 aa).

ATP is bound by residues Thr-29–Pro-32, Asp-86–Thr-90, Gly-413, Asn-476–Ala-478, and Asp-492.

It belongs to the chaperonin (HSP60) family. In terms of assembly, forms a cylinder of 14 subunits composed of two heptameric rings stacked back-to-back. Interacts with the co-chaperonin GroES.

Its subcellular location is the cytoplasm. The catalysed reaction is ATP + H2O + a folded polypeptide = ADP + phosphate + an unfolded polypeptide.. Functionally, together with its co-chaperonin GroES, plays an essential role in assisting protein folding. The GroEL-GroES system forms a nano-cage that allows encapsulation of the non-native substrate proteins and provides a physical environment optimized to promote and accelerate protein folding. This is Chaperonin GroEL from Halalkalibacterium halodurans (strain ATCC BAA-125 / DSM 18197 / FERM 7344 / JCM 9153 / C-125) (Bacillus halodurans).